The primary structure comprises 386 residues: Bifunctional desaturase/conjugase FADX (386 aa).

Positions 1 to 28 (MGAGGRMSVAPNNSKCEKKESRSVKRVP) are disordered. The next 2 helical transmembrane spans lie at 65-85 (LSFI…SPIT) and 87-107 (IAWP…WVLG). Positions 108 to 112 (HECGH) match the Histidine box-1 motif. Positions 144–148 (HRRHH) match the Histidine box-2 motif. 3 helical membrane-spanning segments follow: residues 182–202 (ALTL…FNVS), 228–248 (IYIS…IAMA), and 250–270 (GLAW…ALVV). The short motif at 318–322 (HVIHH) is the Histidine box-3 element.

This sequence belongs to the fatty acid desaturase type 1 family. In terms of tissue distribution, expressed exclusively in developing seeds.

Its subcellular location is the endoplasmic reticulum membrane. It carries out the reaction a (9Z,12Z)-octadecadienoyl-containing glycerolipid + 2 Fe(II)-[cytochrome b5] + O2 + 2 H(+) = a (9Z,11E,13E)-octadecatrienoyl-containing glycerolipid + 2 Fe(III)-[cytochrome b5] + 2 H2O. It catalyses the reaction (9Z,12Z,15Z)-octadecatrienoyl-containing glycerolipid + 2 Fe(II)-[cytochrome b5] + O2 + 2 H(+) = a (9Z,11E,13E,15Z)-octadecatetraenoyl-containing glycerolipid + 2 Fe(III)-[cytochrome b5] + 2 H2O. The enzyme catalyses a (9Z)-octadecenoyl-containing glycerolipid + 2 Fe(II)-[cytochrome b5] + O2 + 2 H(+) = a (9Z,12E)-octadecadienoyl-containing glycerolipid + 2 Fe(III)-[cytochrome b5] + 2 H2O. The catalysed reaction is a (9Z)-hexadecenoyl-containing glycerolipid + 2 Fe(II)-[cytochrome b5] + O2 + 2 H(+) = a (9Z,12E)-hexadecadienoyl-containing glycerolipid + 2 Fe(III)-[cytochrome b5] + 2 H2O. The protein operates within lipid metabolism; polyunsaturated fatty acid biosynthesis. Converts linoleic acid to alpha-eleostearic acid (18:3(9Z,11E,13E)) and alpha-linolenic acid to alpha-parinaric acid (18:4(9Z,11E,13E,15Z)). Converts a single cis double bond at carbon 12 to two conjugated trans bonds at positions 11 and 13. Can also act as a 12(E) desaturase when acting on the monounsaturated fatty acids oleate and palmitoleate, stereoselectively introducing a trans double bond. This is Bifunctional desaturase/conjugase FADX from Vernicia fordii (Tung).